Reading from the N-terminus, the 270-residue chain is Nuclease PA3 (270 aa).

A divalent metal cation-binding residues include tryptophan 1, histidine 6, histidine 15, aspartate 45, and histidine 60. 1–6 provides a ligand contact to substrate; it reads WGALGH. Substrate-binding positions include 45–51, 60–63, and 73–78; these read DEYRLTS, HFID, and NVDYER. Disulfide bonds link cysteine 72–cysteine 217 and cysteine 80–cysteine 85. Asparagine 92 contacts substrate. N-linked (GlcNAc...) asparagine glycosylation occurs at asparagine 92. A divalent metal cation contacts are provided by histidine 116, aspartate 120, and histidine 126. The interval 116 to 164 is substrate binding; that stretch reads HFIGDMTQPLHDEAYAVGGNKINVTFDGYHDNLHSDWDTYMPQKLIGGH. An N-linked (GlcNAc...) asparagine glycan is attached at asparagine 138. Positions 149 and 153 each coordinate a divalent metal cation. N-linked (GlcNAc...) asparagine glycosylation is found at asparagine 184 and asparagine 197.

This sequence belongs to the nuclease type I family. Requires Zn(2+) as cofactor.

It localises to the secreted. The enzyme catalyses a ribonucleoside 3'-phosphate + H2O = a ribonucleoside + phosphate. Functionally, hydrolyzes only single-stranded DNA and RNA without apparent specificity for bases. This chain is Nuclease PA3, found in Penicillium sp.